The sequence spans 288 residues: Light-independent protochlorophyllide reductase iron-sulfur ATP-binding protein (288 aa).

Residues 10 to 15 (GIGKST) and Lys-39 each bind ATP. Ser-14 provides a ligand contact to Mg(2+). The [4Fe-4S] cluster site is built by Cys-95 and Cys-129. Residue 180–181 (NR) coordinates ATP.

Belongs to the NifH/BchL/ChlL family. As to quaternary structure, homodimer. Protochlorophyllide reductase is composed of three subunits; ChlL, ChlN and ChlB. [4Fe-4S] cluster is required as a cofactor.

The enzyme catalyses chlorophyllide a + oxidized 2[4Fe-4S]-[ferredoxin] + 2 ADP + 2 phosphate = protochlorophyllide a + reduced 2[4Fe-4S]-[ferredoxin] + 2 ATP + 2 H2O. It functions in the pathway porphyrin-containing compound metabolism; chlorophyll biosynthesis (light-independent). Component of the dark-operative protochlorophyllide reductase (DPOR) that uses Mg-ATP and reduced ferredoxin to reduce ring D of protochlorophyllide (Pchlide) to form chlorophyllide a (Chlide). This reaction is light-independent. The L component serves as a unique electron donor to the NB-component of the complex, and binds Mg-ATP. This Nostoc punctiforme (strain ATCC 29133 / PCC 73102) protein is Light-independent protochlorophyllide reductase iron-sulfur ATP-binding protein.